Here is a 92-residue protein sequence, read N- to C-terminus: Small ribosomal subunit protein bS21 (92 aa).

The interval 37–92 is disordered; sequence QREGTFREMKRRNHYEKPSEKKARQKAEAIRRARKLARKRAQREGLIAKRGGTTRR. Over residues 51–67 the composition is skewed to basic and acidic residues; sequence YEKPSEKKARQKAEAIR. Residues 68-77 show a composition bias toward basic residues; the sequence is RARKLARKRA.

The protein belongs to the bacterial ribosomal protein bS21 family.

This Maricaulis maris (strain MCS10) (Caulobacter maris) protein is Small ribosomal subunit protein bS21.